Reading from the N-terminus, the 404-residue chain is Chorismate synthase (404 aa).

NADP(+)-binding residues include R40 and R46. Residues 136–138 (RAS), 257–258 (QA), G301, 316–320 (KPIST), and R342 each bind FMN.

It belongs to the chorismate synthase family. As to quaternary structure, homotetramer. The cofactor is FMNH2.

It catalyses the reaction 5-O-(1-carboxyvinyl)-3-phosphoshikimate = chorismate + phosphate. Its pathway is metabolic intermediate biosynthesis; chorismate biosynthesis; chorismate from D-erythrose 4-phosphate and phosphoenolpyruvate: step 7/7. Its function is as follows. Catalyzes the anti-1,4-elimination of the C-3 phosphate and the C-6 proR hydrogen from 5-enolpyruvylshikimate-3-phosphate (EPSP) to yield chorismate, which is the branch point compound that serves as the starting substrate for the three terminal pathways of aromatic amino acid biosynthesis. This reaction introduces a second double bond into the aromatic ring system. This chain is Chorismate synthase, found in Mycolicibacterium vanbaalenii (strain DSM 7251 / JCM 13017 / BCRC 16820 / KCTC 9966 / NRRL B-24157 / PYR-1) (Mycobacterium vanbaalenii).